The sequence spans 312 residues: DNA-directed RNA polymerase subunit alpha (312 aa).

Residues 1–229 form an alpha N-terminal domain (alpha-NTD) region; that stretch reads MLQYQIDRIE…ELFQPLATVT (229 aa). Residues 245 to 312 form an alpha C-terminal domain (alpha-CTD) region; it reads QIPLEELNLS…ISIPQSRTSA (68 aa).

The protein belongs to the RNA polymerase alpha chain family. In cyanobacteria the RNAP catalytic core is composed of 2 alpha, 1 beta, 1 beta', 1 gamma and 1 omega subunit. When a sigma factor is associated with the core the holoenzyme is formed, which can initiate transcription.

It carries out the reaction RNA(n) + a ribonucleoside 5'-triphosphate = RNA(n+1) + diphosphate. In terms of biological role, DNA-dependent RNA polymerase catalyzes the transcription of DNA into RNA using the four ribonucleoside triphosphates as substrates. The protein is DNA-directed RNA polymerase subunit alpha of Prochlorococcus marinus (strain MIT 9313).